A 527-amino-acid polypeptide reads, in one-letter code: Peptide chain release factor 3 (527 aa).

One can recognise a tr-type G domain in the interval 9-277 (AKRRTFAIIS…AVVNWAPKPL (269 aa)). GTP contacts are provided by residues 18–25 (SHPDAGKT), 86–90 (DTPGH), and 140–143 (NKLD).

Belongs to the TRAFAC class translation factor GTPase superfamily. Classic translation factor GTPase family. PrfC subfamily.

The protein localises to the cytoplasm. Functionally, increases the formation of ribosomal termination complexes and stimulates activities of RF-1 and RF-2. It binds guanine nucleotides and has strong preference for UGA stop codons. It may interact directly with the ribosome. The stimulation of RF-1 and RF-2 is significantly reduced by GTP and GDP, but not by GMP. The polypeptide is Peptide chain release factor 3 (Pseudomonas syringae pv. syringae (strain B728a)).